We begin with the raw amino-acid sequence, 397 residues long: Phosphoglycerate kinase (397 aa).

Substrate-binding positions include 25-27 (DLN), R41, 64-67 (HLGR), R118, and R151. ATP-binding positions include K202, E324, and 350–353 (GGDT).

It belongs to the phosphoglycerate kinase family. In terms of assembly, monomer.

The protein resides in the cytoplasm. It carries out the reaction (2R)-3-phosphoglycerate + ATP = (2R)-3-phospho-glyceroyl phosphate + ADP. Its pathway is carbohydrate degradation; glycolysis; pyruvate from D-glyceraldehyde 3-phosphate: step 2/5. The polypeptide is Phosphoglycerate kinase (Acidovorax sp. (strain JS42)).